We begin with the raw amino-acid sequence, 156 residues long: Small ribosomal subunit protein uS7 (156 aa).

This sequence belongs to the universal ribosomal protein uS7 family. Part of the 30S ribosomal subunit. Contacts proteins S9 and S11.

In terms of biological role, one of the primary rRNA binding proteins, it binds directly to 16S rRNA where it nucleates assembly of the head domain of the 30S subunit. Is located at the subunit interface close to the decoding center, probably blocks exit of the E-site tRNA. The chain is Small ribosomal subunit protein uS7 from Vibrio campbellii (strain ATCC BAA-1116).